The following is a 136-amino-acid chain: Small ribosomal subunit protein uS8c (136 aa).

It belongs to the universal ribosomal protein uS8 family. Part of the 30S ribosomal subunit.

It is found in the plastid. The protein localises to the chloroplast. Functionally, one of the primary rRNA binding proteins, it binds directly to 16S rRNA central domain where it helps coordinate assembly of the platform of the 30S subunit. This is Small ribosomal subunit protein uS8c (rps8) from Saccharum officinarum (Sugarcane).